The primary structure comprises 334 residues: NADH dehydrogenase (ubiquinone) complex I, assembly factor 6 homolog (334 aa).

The transit peptide at 1–11 directs the protein to the mitochondrion; the sequence is MRRLVRNWNCR.

The protein belongs to the NDUFAF6 family. In terms of assembly, associates with mitochondrial complex I assembly intermediates during its biogenesis. Forms a complex including sicily, ND-42 and Hsp83; the complex is necessary to chaperone ND-42 in the cytoplasm before mitochondrial import; the interaction between sicily and ND-42 is direct and occurs preferably between the unprocessed forms in the cytoplasm; the interaction with Hsp83 is direct. Interacts with ND-30; interaction is stronger between the unprocessed forms in the cytoplasm. In terms of tissue distribution, expressed in the ventral nerve cord, larval brain, motor neuron axons, imaginal disks, and muscles (at protein level).

It localises to the mitochondrion inner membrane. Its subcellular location is the cytoplasm. It is found in the cytosol. Involved in the assembly of mitochondrial NADH:ubiquinone oxidoreductase complex (Complex I) at early stages. Interacts with cytosolic Hsp90 to chaperone the Complex I subunit ND-42 in the cytoplasm. This Drosophila melanogaster (Fruit fly) protein is NADH dehydrogenase (ubiquinone) complex I, assembly factor 6 homolog.